A 614-amino-acid polypeptide reads, in one-letter code: Vitamin B12 transporter BtuB (614 aa).

The signal sequence occupies residues 1–20 (MIKKATLLTAFSVTAFSAWA). The TonB box signature appears at 26–33 (DTLVVTAN). Positions 38 to 152 (PRSAVLAPVT…IGGVVNIITT (115 aa)) constitute a TBDR plug domain. Residues Ser-85, Asn-92, and 110-111 (VS) contribute to the cyanocob(III)alamin site. The 460-residue stretch at 155–614 (NPGTELTAGW…EYTLSGSYTF (460 aa)) folds into the TBDR beta-barrel domain. The next 3 membrane-spanning stretches (beta stranded) occupy residues 158-165 (TELTAGWG), 169-178 (YQNYDISTQQ), and 184-195 (TRATLIGDYEYT). Asp-199, Gln-211, Asp-213, and Asp-215 together coordinate Ca(2+). A run of 2 beta stranded transmembrane segments spans residues 217-227 (FLSKTLYGALE) and 232-248 (DRWSGFVRGYGYDNRTD). Ca(2+) is bound by residues Tyr-249 and Asp-250. Ala-251 contributes to the cyanocob(III)alamin binding site. Position 261 (Asp-261) interacts with Ca(2+). A run of 14 beta stranded transmembrane segments spans residues 263 to 277 (RKLYSQSWDAGLRFN), 279 to 296 (ERIQSQLVSSYSHSKDYN), 309 to 325 (TLDEMKQYNVQWTNSVV), 328 to 337 (HGNVGAGVDW), 353 to 369 (YDQRNTGVYLTGLQQLG), 371 to 381 (FTLEAAARSDD), 385 to 400 (FGRHGTWQTSAGWEFI), 403 to 417 (YRFIASYGTSYKAPN), 434 to 443 (KSKQWEGAFE), 449 to 458 (VSWRISGYRN), 473 to 490 (YYNEGKARIKGIEATANF), 494 to 509 (PLTHTVSYDYVDARNA), 517 to 529 (RRSKQMAKYQLDW), and 535 to 550 (DWGVTYQYLGSRYDSD). Thr-309 provides a ligand contact to cyanocob(III)alamin. Position 517 (Arg-517) interacts with cyanocob(III)alamin. Position 551 (Tyr-551) interacts with cyanocob(III)alamin. The next 3 beta stranded transmembrane spans lie at 558-572 (TVKMGGVSLWDLTVA), 585-596 (IANLFDKDYETV), and 602-614 (AGREYTLSGSYTF). The TonB C-terminal box motif lies at 597 to 614 (YGYQTAGREYTLSGSYTF).

The protein belongs to the TonB-dependent receptor family. BtuB (TC 1.B.14.3.1) subfamily.

Its subcellular location is the cell outer membrane. Involved in the active translocation of vitamin B12 (cyanocobalamin) across the outer membrane to the periplasmic space. It derives its energy for transport by interacting with the trans-periplasmic membrane protein TonB. This Salmonella choleraesuis (strain SC-B67) protein is Vitamin B12 transporter BtuB.